We begin with the raw amino-acid sequence, 151 residues long: Ribosome maturation factor RimP (151 aa).

The protein belongs to the RimP family.

The protein localises to the cytoplasm. In terms of biological role, required for maturation of 30S ribosomal subunits. This chain is Ribosome maturation factor RimP, found in Colwellia psychrerythraea (strain 34H / ATCC BAA-681) (Vibrio psychroerythus).